The following is a 364-amino-acid chain: tRNA 2-selenouridine synthase (364 aa).

Positions 14–137 (LIADTPIIDV…LRQTAIQATI (124 aa)) constitute a Rhodanese domain. C97 acts as the S-selanylcysteine intermediate in catalysis.

Belongs to the SelU family. In terms of assembly, monomer.

It catalyses the reaction 5-methylaminomethyl-2-thiouridine(34) in tRNA + selenophosphate + (2E)-geranyl diphosphate + H2O + H(+) = 5-methylaminomethyl-2-selenouridine(34) in tRNA + (2E)-thiogeraniol + phosphate + diphosphate. It carries out the reaction 5-methylaminomethyl-2-thiouridine(34) in tRNA + (2E)-geranyl diphosphate = 5-methylaminomethyl-S-(2E)-geranyl-thiouridine(34) in tRNA + diphosphate. The catalysed reaction is 5-methylaminomethyl-S-(2E)-geranyl-thiouridine(34) in tRNA + selenophosphate + H(+) = 5-methylaminomethyl-2-(Se-phospho)selenouridine(34) in tRNA + (2E)-thiogeraniol. The enzyme catalyses 5-methylaminomethyl-2-(Se-phospho)selenouridine(34) in tRNA + H2O = 5-methylaminomethyl-2-selenouridine(34) in tRNA + phosphate. Its function is as follows. Involved in the post-transcriptional modification of the uridine at the wobble position (U34) of tRNA(Lys), tRNA(Glu) and tRNA(Gln). Catalyzes the conversion of 2-thiouridine (S2U-RNA) to 2-selenouridine (Se2U-RNA). Acts in a two-step process involving geranylation of 2-thiouridine (S2U) to S-geranyl-2-thiouridine (geS2U) and subsequent selenation of the latter derivative to 2-selenouridine (Se2U) in the tRNA chain. This is tRNA 2-selenouridine synthase from Escherichia coli O6:K15:H31 (strain 536 / UPEC).